The following is a 285-amino-acid chain: MAQSRLFFSADKAEAERTYNILEQAFEDDGFPIAITEIDEDRQIFEVSVYVEDDAEEVAARVDALVGPGLFDTEELPDIDWVTHSLEGLKPVRAGHFFVHGSHDRDKIEPGDIAIEIDAGLAFGTGHHGTTAGCLELIEETVETEHPTNALDLGTGSAVLAIAIARLAPIPILATDIDPIAVTVAAENAAKNGVAEHIVTATAEGFGHPIFRSYSPFDLIVANILANPLIELAPSIKEHLAPGGSIILSGILDSQHDAVLAAYQTQGLTHQKTLHREGWVAIHLK.

Positions 131, 154, 176, and 223 each coordinate S-adenosyl-L-methionine.

It belongs to the methyltransferase superfamily. PrmA family.

It localises to the cytoplasm. It catalyses the reaction L-lysyl-[protein] + 3 S-adenosyl-L-methionine = N(6),N(6),N(6)-trimethyl-L-lysyl-[protein] + 3 S-adenosyl-L-homocysteine + 3 H(+). Functionally, methylates ribosomal protein L11. This Brucella melitensis biotype 2 (strain ATCC 23457) protein is Ribosomal protein L11 methyltransferase.